The following is a 476-amino-acid chain: Ribulose bisphosphate carboxylase large chain (476 aa).

Positions 1 to 2 are excised as a propeptide; it reads MS. P3 carries the post-translational modification N-acetylproline. An N6,N6,N6-trimethyllysine modification is found at K14. Residues N123 and T173 each coordinate substrate. K175 acts as the Proton acceptor in catalysis. K177 is a substrate binding site. Residues K201, D203, and E204 each coordinate Mg(2+). K201 bears the N6-carboxylysine mark. H294 (proton acceptor) is an active-site residue. 3 residues coordinate substrate: R295, H327, and S379.

It belongs to the RuBisCO large chain family. Type I subfamily. In terms of assembly, heterohexadecamer of 8 large chains and 8 small chains; disulfide-linked. The disulfide link is formed within the large subunit homodimers. The cofactor is Mg(2+). In terms of processing, the disulfide bond which can form in the large chain dimeric partners within the hexadecamer appears to be associated with oxidative stress and protein turnover.

The protein localises to the plastid. Its subcellular location is the chloroplast. It catalyses the reaction 2 (2R)-3-phosphoglycerate + 2 H(+) = D-ribulose 1,5-bisphosphate + CO2 + H2O. The enzyme catalyses D-ribulose 1,5-bisphosphate + O2 = 2-phosphoglycolate + (2R)-3-phosphoglycerate + 2 H(+). Its function is as follows. RuBisCO catalyzes two reactions: the carboxylation of D-ribulose 1,5-bisphosphate, the primary event in carbon dioxide fixation, as well as the oxidative fragmentation of the pentose substrate in the photorespiration process. Both reactions occur simultaneously and in competition at the same active site. The polypeptide is Ribulose bisphosphate carboxylase large chain (Zea mays (Maize)).